A 269-amino-acid chain; its full sequence is Interleukin-1 beta (269 aa).

A propeptide spanning residues 1–116 (MAEVPELASE…TRNNDACVHD (116 aa)) is cleaved from the precursor.

Belongs to the IL-1 family. As to quaternary structure, monomer. In its precursor form, weakly interacts with full-length MEFV; the mature cytokine does not interact at all. Interacts with integrins ITGAV:ITGBV and ITGA5:ITGB1; integrin-binding is required for IL1B signaling. Interacts with cargo receptor TMED10; the interaction is direct and is required for the secretion of IL1B mature form. Interacts with HSP90AB1; the interaction facilitates cargo translocation into the ERGIC. Interacts with HSP90B1; the interaction facilitates cargo translocation into the ERGIC.

The protein localises to the cytoplasm. Its subcellular location is the cytosol. It is found in the secreted. The protein resides in the lysosome. It localises to the extracellular exosome. Its function is as follows. Potent pro-inflammatory cytokine. Initially discovered as the major endogenous pyrogen, induces prostaglandin synthesis, neutrophil influx and activation, T-cell activation and cytokine production, B-cell activation and antibody production, and fibroblast proliferation and collagen production. Promotes Th17 differentiation of T-cells. Synergizes with IL12/interleukin-12 to induce IFNG synthesis from T-helper 1 (Th1) cells. Plays a role in angiogenesis by inducing VEGF production synergistically with TNF and IL6. Involved in transduction of inflammation downstream of pyroptosis: its mature form is specifically released in the extracellular milieu by passing through the gasdermin-D (GSDMD) pore. The protein is Interleukin-1 beta (IL1B) of Macaca nemestrina (Pig-tailed macaque).